Consider the following 227-residue polypeptide: Cytochrome c oxidase subunit 2 (227 aa).

The Mitochondrial intermembrane portion of the chain corresponds to 1 to 14; that stretch reads MAYPMQLGFQDATS. The helical transmembrane segment at 15–45 threads the bilayer; that stretch reads PIMEELLHFHDHTLMIVFLISSLVLYIISLM. At 46–59 the chain is on the mitochondrial matrix side; sequence LTTKLTHTSTMDAQ. The helical transmembrane segment at 60-87 threads the bilayer; it reads EVETIWTILPAIILILIALPSLRILYMM. Over 88–227 the chain is Mitochondrial intermembrane; it reads DEINNPSLTV…YFEKWSASML (140 aa). Cu cation contacts are provided by His-161, Cys-196, Glu-198, Cys-200, His-204, and Met-207. Glu-198 provides a ligand contact to Mg(2+). At Tyr-218 the chain carries Phosphotyrosine.

Belongs to the cytochrome c oxidase subunit 2 family. In terms of assembly, component of the cytochrome c oxidase (complex IV, CIV), a multisubunit enzyme composed of 14 subunits. The complex is composed of a catalytic core of 3 subunits MT-CO1, MT-CO2 and MT-CO3, encoded in the mitochondrial DNA, and 11 supernumerary subunits COX4I, COX5A, COX5B, COX6A, COX6B, COX6C, COX7A, COX7B, COX7C, COX8 and NDUFA4, which are encoded in the nuclear genome. The complex exists as a monomer or a dimer and forms supercomplexes (SCs) in the inner mitochondrial membrane with NADH-ubiquinone oxidoreductase (complex I, CI) and ubiquinol-cytochrome c oxidoreductase (cytochrome b-c1 complex, complex III, CIII), resulting in different assemblies (supercomplex SCI(1)III(2)IV(1) and megacomplex MCI(2)III(2)IV(2)). Found in a complex with TMEM177, COA6, COX18, COX20, SCO1 and SCO2. Interacts with TMEM177 in a COX20-dependent manner. Interacts with COX20. Interacts with COX16. Requires Cu cation as cofactor.

The protein localises to the mitochondrion inner membrane. It carries out the reaction 4 Fe(II)-[cytochrome c] + O2 + 8 H(+)(in) = 4 Fe(III)-[cytochrome c] + 2 H2O + 4 H(+)(out). Functionally, component of the cytochrome c oxidase, the last enzyme in the mitochondrial electron transport chain which drives oxidative phosphorylation. The respiratory chain contains 3 multisubunit complexes succinate dehydrogenase (complex II, CII), ubiquinol-cytochrome c oxidoreductase (cytochrome b-c1 complex, complex III, CIII) and cytochrome c oxidase (complex IV, CIV), that cooperate to transfer electrons derived from NADH and succinate to molecular oxygen, creating an electrochemical gradient over the inner membrane that drives transmembrane transport and the ATP synthase. Cytochrome c oxidase is the component of the respiratory chain that catalyzes the reduction of oxygen to water. Electrons originating from reduced cytochrome c in the intermembrane space (IMS) are transferred via the dinuclear copper A center (CU(A)) of subunit 2 and heme A of subunit 1 to the active site in subunit 1, a binuclear center (BNC) formed by heme A3 and copper B (CU(B)). The BNC reduces molecular oxygen to 2 water molecules using 4 electrons from cytochrome c in the IMS and 4 protons from the mitochondrial matrix. This is Cytochrome c oxidase subunit 2 (MT-CO2) from Bison bonasus (European bison).